A 143-amino-acid chain; its full sequence is MRLLVNNKKAKYNYELLDKYEAGISLSGNEVKSLALHHGKLDDSYVIIRKNEAYLLNLLIPKYKFDTSKVLNETRTRKLLLHKSEILKIDLIKKQHSLVIIPYQIYFVNNKIKVSIYLARPKKRYDKRQTIKEREINKKIRKY.

It belongs to the SmpB family.

Its subcellular location is the cytoplasm. Functionally, required for rescue of stalled ribosomes mediated by trans-translation. Binds to transfer-messenger RNA (tmRNA), required for stable association of tmRNA with ribosomes. tmRNA and SmpB together mimic tRNA shape, replacing the anticodon stem-loop with SmpB. tmRNA is encoded by the ssrA gene; the 2 termini fold to resemble tRNA(Ala) and it encodes a 'tag peptide', a short internal open reading frame. During trans-translation Ala-aminoacylated tmRNA acts like a tRNA, entering the A-site of stalled ribosomes, displacing the stalled mRNA. The ribosome then switches to translate the ORF on the tmRNA; the nascent peptide is terminated with the 'tag peptide' encoded by the tmRNA and targeted for degradation. The ribosome is freed to recommence translation, which seems to be the essential function of trans-translation. The chain is SsrA-binding protein from Mycoplasmoides gallisepticum (strain R(low / passage 15 / clone 2)) (Mycoplasma gallisepticum).